Reading from the N-terminus, the 99-residue chain is UPF0320 protein YER188C-A (99 aa).

Belongs to the UPF0320 family.

This chain is UPF0320 protein YER188C-A, found in Saccharomyces cerevisiae (strain ATCC 204508 / S288c) (Baker's yeast).